The chain runs to 360 residues: UDP-N-acetylglucosamine--N-acetylmuramyl-(pentapeptide) pyrophosphoryl-undecaprenol N-acetylglucosamine transferase (360 aa).

Residues serine 198 and glutamine 289 each coordinate UDP-N-acetyl-alpha-D-glucosamine.

This sequence belongs to the glycosyltransferase 28 family. MurG subfamily.

It is found in the cell membrane. It carries out the reaction Mur2Ac(oyl-L-Ala-gamma-D-Glu-L-Lys-D-Ala-D-Ala)-di-trans,octa-cis-undecaprenyl diphosphate + UDP-N-acetyl-alpha-D-glucosamine = beta-D-GlcNAc-(1-&gt;4)-Mur2Ac(oyl-L-Ala-gamma-D-Glu-L-Lys-D-Ala-D-Ala)-di-trans,octa-cis-undecaprenyl diphosphate + UDP + H(+). Its pathway is cell wall biogenesis; peptidoglycan biosynthesis. Its function is as follows. Cell wall formation. Catalyzes the transfer of a GlcNAc subunit on undecaprenyl-pyrophosphoryl-MurNAc-pentapeptide (lipid intermediate I) to form undecaprenyl-pyrophosphoryl-MurNAc-(pentapeptide)GlcNAc (lipid intermediate II). This chain is UDP-N-acetylglucosamine--N-acetylmuramyl-(pentapeptide) pyrophosphoryl-undecaprenol N-acetylglucosamine transferase, found in Streptococcus pyogenes serotype M6 (strain ATCC BAA-946 / MGAS10394).